Reading from the N-terminus, the 418-residue chain is Tyrosine--tRNA ligase (418 aa).

L-tyrosine is bound at residue tyrosine 34. A 'HIGH' region motif is present at residues 39 to 48; the sequence is PTGDSMHIGH. 2 residues coordinate L-tyrosine: tyrosine 166 and glutamine 170. Positions 228 to 232 match the 'KMSKS' region motif; the sequence is KFGKT. Lysine 231 is a binding site for ATP. The S4 RNA-binding domain maps to 350-417; that stretch reads TNIVELLTET…KKNYFLAKVK (68 aa).

The protein belongs to the class-I aminoacyl-tRNA synthetase family. TyrS type 1 subfamily. As to quaternary structure, homodimer.

It is found in the cytoplasm. It carries out the reaction tRNA(Tyr) + L-tyrosine + ATP = L-tyrosyl-tRNA(Tyr) + AMP + diphosphate + H(+). Functionally, catalyzes the attachment of tyrosine to tRNA(Tyr) in a two-step reaction: tyrosine is first activated by ATP to form Tyr-AMP and then transferred to the acceptor end of tRNA(Tyr). This is Tyrosine--tRNA ligase from Levilactobacillus brevis (Lactobacillus brevis).